Consider the following 365-residue polypeptide: 3-dehydroquinate synthase (365 aa).

Residues 107-111 (GVIGD), 131-132 (TS), Lys-144, and Lys-153 each bind NAD(+). Residues Glu-186, His-251, and His-268 each coordinate Zn(2+).

This sequence belongs to the sugar phosphate cyclases superfamily. Dehydroquinate synthase family. The cofactor is Co(2+). It depends on Zn(2+) as a cofactor. NAD(+) serves as cofactor.

It is found in the cytoplasm. It catalyses the reaction 7-phospho-2-dehydro-3-deoxy-D-arabino-heptonate = 3-dehydroquinate + phosphate. Its pathway is metabolic intermediate biosynthesis; chorismate biosynthesis; chorismate from D-erythrose 4-phosphate and phosphoenolpyruvate: step 2/7. Functionally, catalyzes the conversion of 3-deoxy-D-arabino-heptulosonate 7-phosphate (DAHP) to dehydroquinate (DHQ). This Crocosphaera subtropica (strain ATCC 51142 / BH68) (Cyanothece sp. (strain ATCC 51142)) protein is 3-dehydroquinate synthase.